The chain runs to 190 residues: Large ribosomal subunit protein bL25 (190 aa).

The protein belongs to the bacterial ribosomal protein bL25 family. CTC subfamily. In terms of assembly, part of the 50S ribosomal subunit; part of the 5S rRNA/L5/L18/L25 subcomplex. Contacts the 5S rRNA. Binds to the 5S rRNA independently of L5 and L18.

In terms of biological role, this is one of the proteins that binds to the 5S RNA in the ribosome where it forms part of the central protuberance. The polypeptide is Large ribosomal subunit protein bL25 (Neisseria meningitidis serogroup C / serotype 2a (strain ATCC 700532 / DSM 15464 / FAM18)).